Consider the following 198-residue polypeptide: Sorcin (198 aa).

EF-hand domains follow at residues Gln-45 to Ala-64, Phe-70 to Leu-98, Ala-100 to Arg-135, and Ser-151 to Leu-169. Residues Asp-83, Asp-85, Ser-87, Thr-89, Glu-94, Asp-113, Asp-115, Ser-117, Thr-119, and Glu-124 each coordinate Ca(2+). Ser-178 carries the post-translational modification Phosphoserine.

Homodimer. Interacts with GCA, RYR2 and ANXA7. In terms of tissue distribution, detected in cardiac myocytes.

The protein localises to the cytoplasm. The protein resides in the sarcoplasmic reticulum membrane. Calcium-binding protein that modulates excitation-contraction coupling in the heart. Contributes to calcium homeostasis in the heart sarcoplasmic reticulum. Modulates the activity of RYR2 calcium channels. The chain is Sorcin (Sri) from Mus musculus (Mouse).